The following is a 119-amino-acid chain: Beta-2-microglobulin (119 aa).

An N-terminal signal peptide occupies residues 1-20 (MVCSVVVALLALLSLSGLEA). An Ig-like C1-type domain is found at 25–114 (PKIQVYSRHP…VTFSTPKTVK (90 aa)). Cys-45 and Cys-100 form a disulfide bridge.

This sequence belongs to the beta-2-microglobulin family. Heterodimer of an alpha chain and a beta chain. Beta-2-microglobulin is the beta-chain of major histocompatibility complex class I molecules.

It is found in the secreted. In terms of biological role, component of the class I major histocompatibility complex (MHC). Involved in the presentation of peptide antigens to the immune system. This is Beta-2-microglobulin (B2M) from Cebuella pygmaea (Pygmy marmoset).